Here is a 200-residue protein sequence, read N- to C-terminus: Recombination protein RecR (200 aa).

The C4-type zinc-finger motif lies at 60-75 (CVYCQALTEDDVCNIC). In terms of domain architecture, Toprim spans 83-177 (TKLCIIESML…KISRIGFGVP (95 aa)).

The protein belongs to the RecR family.

Functionally, may play a role in DNA repair. It seems to be involved in an RecBC-independent recombinational process of DNA repair. It may act with RecF and RecO. In Francisella tularensis subsp. novicida (strain U112), this protein is Recombination protein RecR.